The primary structure comprises 132 residues: Small ribosomal subunit protein uS12 (132 aa).

3-methylthioaspartic acid is present on aspartate 89.

Belongs to the universal ribosomal protein uS12 family. In terms of assembly, part of the 30S ribosomal subunit. Contacts proteins S8 and S17. May interact with IF1 in the 30S initiation complex.

In terms of biological role, with S4 and S5 plays an important role in translational accuracy. Functionally, interacts with and stabilizes bases of the 16S rRNA that are involved in tRNA selection in the A site and with the mRNA backbone. Located at the interface of the 30S and 50S subunits, it traverses the body of the 30S subunit contacting proteins on the other side and probably holding the rRNA structure together. The combined cluster of proteins S8, S12 and S17 appears to hold together the shoulder and platform of the 30S subunit. The protein is Small ribosomal subunit protein uS12 of Campylobacter curvus (strain 525.92).